We begin with the raw amino-acid sequence, 97 residues long: MKIIKDALAGTLESSDVMIRIGPSSEPGIRLELESLVKQQFGAAIEQVVRETLAKLGVERALVSVDDKGALECILRARVQAAALRAAEQTEIQWSAL.

An O-(phosphoribosyl dephospho-coenzyme A)serine modification is found at Ser14.

Belongs to the CitD family. In terms of assembly, oligomer with a subunit composition of (alpha,beta,gamma)6.

It is found in the cytoplasm. In terms of biological role, covalent carrier of the coenzyme of citrate lyase. This Salmonella paratyphi A (strain ATCC 9150 / SARB42) protein is Citrate lyase acyl carrier protein 2.